We begin with the raw amino-acid sequence, 390 residues long: Isoaspartyl dipeptidase (390 aa).

Residues H68 and H70 each contribute to the Zn(2+) site. Residues 75–77 (GGE), T106, and Y137 contribute to the substrate site. Zn(2+) is bound at residue K162. At K162 the chain carries N6-carboxylysine. R169 is a binding site for substrate. H201 and H230 together coordinate Zn(2+). Position 233 (R233) interacts with substrate. Residue D285 participates in Zn(2+) binding. D285 functions as the Proton acceptor in the catalytic mechanism. S289 lines the substrate pocket.

This sequence belongs to the peptidase M38 family. It depends on Zn(2+) as a cofactor. Co(2+) serves as cofactor. Post-translationally, carboxylation allows a single lysine to coordinate two zinc ions.

It localises to the cytoplasm. P-hydroxymercuribenzoate causes a slight inhibition (8 to 17 %). Iodoacetamide, o-iodosobenzoate and ammonium persulfate do not inhibit the enzyme activity. Its function is as follows. Catalyzes the hydrolytic cleavage of a subset of L-isoaspartyl (L-beta-aspartyl) dipeptides. Used to degrade proteins damaged by L-isoaspartyl residues formation. The best substrate for the enzyme reported thus far is iso-Asp-Leu. This chain is Isoaspartyl dipeptidase (iadA), found in Escherichia coli (strain K12).